A 601-amino-acid polypeptide reads, in one-letter code: Probable translation initiation factor IF-2 (601 aa).

The tr-type G domain maps to 10 to 227; the sequence is LRAPIVVVLG…VLAGLAQRYL (218 aa). The G1 stretch occupies residues 19–26; the sequence is GHVDAGKT. 19–26 is a GTP binding site; it reads GHVDAGKT. The tract at residues 44-48 is G2; that stretch reads TMTQH. Positions 83 to 86 are G3; that stretch reads DTPG. Residues 83-87 and 137-140 contribute to the GTP site; these read DTPGH and NKID. The G4 stretch occupies residues 137-140; that stretch reads NKID. Residues 205–207 are G5; that stretch reads SAV.

The protein belongs to the TRAFAC class translation factor GTPase superfamily. Classic translation factor GTPase family. IF-2 subfamily.

In terms of biological role, function in general translation initiation by promoting the binding of the formylmethionine-tRNA to ribosomes. Seems to function along with eIF-2. The protein is Probable translation initiation factor IF-2 of Thermofilum pendens (strain DSM 2475 / Hrk 5).